We begin with the raw amino-acid sequence, 364 residues long: Spermidine/putrescine import ATP-binding protein PotA (364 aa).

One can recognise an ABC transporter domain in the interval 10–244 (IEVVNVSKIF…PAERFVADFI (235 aa)). Position 46 to 53 (46 to 53 (GPSGCGKT)) interacts with ATP.

Belongs to the ABC transporter superfamily. Spermidine/putrescine importer (TC 3.A.1.11.1) family. The complex is composed of two ATP-binding proteins (PotA), two transmembrane proteins (PotB and PotC) and a solute-binding protein (PotD).

It is found in the cell inner membrane. It carries out the reaction ATP + H2O + polyamine-[polyamine-binding protein]Side 1 = ADP + phosphate + polyamineSide 2 + [polyamine-binding protein]Side 1.. Its function is as follows. Part of the ABC transporter complex PotABCD involved in spermidine/putrescine import. Responsible for energy coupling to the transport system. The protein is Spermidine/putrescine import ATP-binding protein PotA of Mesorhizobium japonicum (strain LMG 29417 / CECT 9101 / MAFF 303099) (Mesorhizobium loti (strain MAFF 303099)).